Consider the following 189-residue polypeptide: Protein GrpE (189 aa).

Residues 1–21 (MADEQNLDNQNPETPEQSQAD) form a disordered region. Over residues 7–20 (LDNQNPETPEQSQA) the composition is skewed to polar residues.

The protein belongs to the GrpE family. Homodimer.

It localises to the cytoplasm. In terms of biological role, participates actively in the response to hyperosmotic and heat shock by preventing the aggregation of stress-denatured proteins, in association with DnaK and GrpE. It is the nucleotide exchange factor for DnaK and may function as a thermosensor. Unfolded proteins bind initially to DnaJ; upon interaction with the DnaJ-bound protein, DnaK hydrolyzes its bound ATP, resulting in the formation of a stable complex. GrpE releases ADP from DnaK; ATP binding to DnaK triggers the release of the substrate protein, thus completing the reaction cycle. Several rounds of ATP-dependent interactions between DnaJ, DnaK and GrpE are required for fully efficient folding. The protein is Protein GrpE of Stutzerimonas stutzeri (strain A1501) (Pseudomonas stutzeri).